The sequence spans 281 residues: 2,3,4,5-tetrahydropyridine-2,6-dicarboxylate N-succinyltransferase (281 aa).

Residues arginine 108 and aspartate 145 each coordinate substrate.

The protein belongs to the transferase hexapeptide repeat family. Homotrimer.

The protein resides in the cytoplasm. It catalyses the reaction (S)-2,3,4,5-tetrahydrodipicolinate + succinyl-CoA + H2O = (S)-2-succinylamino-6-oxoheptanedioate + CoA. It functions in the pathway amino-acid biosynthesis; L-lysine biosynthesis via DAP pathway; LL-2,6-diaminopimelate from (S)-tetrahydrodipicolinate (succinylase route): step 1/3. This Nitrobacter winogradskyi (strain ATCC 25391 / DSM 10237 / CIP 104748 / NCIMB 11846 / Nb-255) protein is 2,3,4,5-tetrahydropyridine-2,6-dicarboxylate N-succinyltransferase.